The chain runs to 1677 residues: Vitellogenin (1677 aa).

Residues 1 to 8 (LTIALVGS) form the signal peptide. The region spanning 17 to 655 (FSGSKTYQYK…NAASILPSAV (639 aa)) is the Vitellogenin domain. 2 disordered regions span residues 1089 to 1232 (TLRG…SEEI) and 1252 to 1280 (FQNK…SKQD). Over residues 1098 to 1122 (SSSSSSSSSSSSSSSSSSSSSSQQS) the composition is skewed to low complexity. Over residues 1123–1145 (RMEKRMEQDKLTENLERDRDHMR) the composition is skewed to basic and acidic residues. Positions 1169–1196 (SSSSSSSSSSSGSNSSSSSSSSSSSSSR) are enriched in low complexity. Asparagine 1182, asparagine 1202, asparagine 1217, and asparagine 1218 each carry an N-linked (GlcNAc...) asparagine glycan. Basic residues predominate over residues 1197-1212 (SHNHRNNTRTLSKSKR). 2 stretches are compositionally biased toward low complexity: residues 1215–1229 (NNNN…SSSS) and 1260–1273 (SSSS…SSQS). Positions 1490–1675 (SKCVAQENKF…TATEAASFCV (186 aa)) constitute a VWFD domain. Cystine bridges form between cysteine 1492-cysteine 1631 and cysteine 1515-cysteine 1674. The segment covering 1636–1649 (GERRKEFRMPDGRQ) has biased composition (basic and acidic residues). The disordered stretch occupies residues 1636 to 1659 (GERRKEFRMPDGRQARGPSVSPTP).

In terms of processing, phosvitin, an egg yolk storage protein, is one of the most highly phosphorylated (10%) proteins in nature. Found in liver, testis and undifferentiated gonads of estrogen-treated fish. Not detected in the brain and spleen.

Its function is as follows. Precursor of the major egg-yolk proteins that are sources of nutrients during early development of oviparous organisms. The polypeptide is Vitellogenin (Acipenser transmontanus (White sturgeon)).